The following is a 211-amino-acid chain: Thymidylate kinase (211 aa).

An ATP-binding site is contributed by 12–19 (GIDGSGKS).

The protein belongs to the thymidylate kinase family.

It catalyses the reaction dTMP + ATP = dTDP + ADP. Phosphorylation of dTMP to form dTDP in both de novo and salvage pathways of dTTP synthesis. The polypeptide is Thymidylate kinase (Ruegeria pomeroyi (strain ATCC 700808 / DSM 15171 / DSS-3) (Silicibacter pomeroyi)).